The sequence spans 1220 residues: DNA-directed RNA polymerase subunit beta' (1220 aa).

Positions 60, 62, 75, and 78 each coordinate Zn(2+). The Mg(2+) site is built by D449, D451, and D453. Zn(2+)-binding residues include C818, C892, C899, and C902.

It belongs to the RNA polymerase beta' chain family. In terms of assembly, the RNAP catalytic core consists of 2 alpha, 1 beta, 1 beta' and 1 omega subunit. When a sigma factor is associated with the core the holoenzyme is formed, which can initiate transcription. Mg(2+) serves as cofactor. The cofactor is Zn(2+).

The enzyme catalyses RNA(n) + a ribonucleoside 5'-triphosphate = RNA(n+1) + diphosphate. DNA-dependent RNA polymerase catalyzes the transcription of DNA into RNA using the four ribonucleoside triphosphates as substrates. In Lacticaseibacillus casei (strain BL23) (Lactobacillus casei), this protein is DNA-directed RNA polymerase subunit beta'.